We begin with the raw amino-acid sequence, 66 residues long: Cocaine- and amphetamine-regulated transcript protein (66 aa).

2 disulfide bridges follow: Cys34–Cys52 and Cys40–Cys60.

It belongs to the CART family.

Its subcellular location is the secreted. Its function is as follows. Satiety factor closely associated with the actions of leptin and neuropeptide y; this anorectic peptide inhibits both normal and starvation-induced feeding and completely blocks the feeding response induced by neuropeptide Y and regulated by leptin in the hypothalamus. This is Cocaine- and amphetamine-regulated transcript protein (CARTPT) from Sus scrofa (Pig).